Reading from the N-terminus, the 206-residue chain is MATAAMLCAARALRPRSWIPGTCQAQVRHTHQRASLLSFWELIPMRAEPLRKKKKVDPRKDQAAKDRLKKRIRKLERASQELVPIEDFITPVRFLDKSRQRPQEEHSFEESERRALLLKRWALYKQQEHEMERDAIRAMLEAQQEALEQLKLESTELYAEAIKRDTSLFPFEKEGPHYTPPVPNYQAPEGRYNDITKVYTQVEFKR.

A mitochondrion-targeting transit peptide spans 1 to 46 (MATAAMLCAARALRPRSWIPGTCQAQVRHTHQRASLLSFWELIPMR). The interval 170 to 190 (PFEKEGPHYTPPVPNYQAPEG) is disordered.

Belongs to the mitochondrion-specific ribosomal protein mL40 family. Component of the mitochondrial ribosome large subunit (39S) which comprises a 16S rRNA and about 50 distinct proteins.

It localises to the mitochondrion. The chain is Large ribosomal subunit protein mL40 (Mrpl40) from Rattus norvegicus (Rat).